The chain runs to 144 residues: Peptide methionine sulfoxide reductase MsrB (144 aa).

The MsrB domain occupies Lys5–Val128. Cys117 serves as the catalytic Nucleophile.

The protein belongs to the MsrB Met sulfoxide reductase family.

The enzyme catalyses L-methionyl-[protein] + [thioredoxin]-disulfide + H2O = L-methionyl-(R)-S-oxide-[protein] + [thioredoxin]-dithiol. This is Peptide methionine sulfoxide reductase MsrB from Ligilactobacillus salivarius (strain UCC118) (Lactobacillus salivarius).